Reading from the N-terminus, the 252-residue chain is Chitooligosaccharide deacetylase (252 aa).

Mg(2+)-binding residues include histidine 61 and histidine 125.

Belongs to the YdjC deacetylase family. ChbG subfamily. As to quaternary structure, homodimer. Requires Mg(2+) as cofactor.

It is found in the cytoplasm. The enzyme catalyses N,N'-diacetylchitobiose + H2O = N-acetyl-beta-D-glucosaminyl-(1-&gt;4)-D-glucosamine + acetate. The catalysed reaction is diacetylchitobiose-6'-phosphate + H2O = N'-monoacetylchitobiose-6'-phosphate + acetate. It participates in glycan degradation; chitin degradation. Involved in the degradation of chitin. ChbG is essential for growth on the acetylated chitooligosaccharides chitobiose and chitotriose but is dispensable for growth on cellobiose and chitosan dimer, the deacetylated form of chitobiose. Deacetylation of chitobiose-6-P and chitotriose-6-P is necessary for both the activation of the chb promoter by the regulatory protein ChbR and the hydrolysis of phosphorylated beta-glucosides by the phospho-beta-glucosidase ChbF. Catalyzes the removal of only one acetyl group from chitobiose-6-P to yield monoacetylchitobiose-6-P, the inducer of ChbR and the substrate of ChbF. This chain is Chitooligosaccharide deacetylase, found in Escherichia fergusonii (strain ATCC 35469 / DSM 13698 / CCUG 18766 / IAM 14443 / JCM 21226 / LMG 7866 / NBRC 102419 / NCTC 12128 / CDC 0568-73).